Consider the following 816-residue polypeptide: MVTRLRLVSRSSRYATVKFTDSVSACSCRRLFSASTDPEPESQPEQAPPTNPVTGDEKLRNLRVLLQQNRIETARGVLSSLLRSDSTPFASPKELFSAFSLSSPSLKHDFSYLLLSVLLNESKMISEAADLFFALRNEGIYPSSDSLTLLLDHLVKTKQFRVTINVFLNILESDFRPSKFMYGKAIQAAVKLSDVGKGLELFNRMKHDRIYPSVFIYNVLIDGLCKGKRMNDAEQLFDEMLARRLLPSLITYNTLIDGYCKAGNPEKSFKVRERMKADHIEPSLITFNTLLKGLFKAGMVEDAENVLKEMKDLGFVPDAFTFSILFDGYSSNEKAEAALGVYETAVDSGVKMNAYTCSILLNALCKEGKIEKAEEILGREMAKGLVPNEVIYNTMIDGYCRKGDLVGARMKIEAMEKQGMKPDHLAYNCLIRRFCELGEMENAEKEVNKMKLKGVSPSVETYNILIGGYGRKYEFDKCFDILKEMEDNGTMPNVVSYGTLINCLCKGSKLLEAQIVKRDMEDRGVSPKVRIYNMLIDGCCSKGKIEDAFRFSKEMLKKGIELNLVTYNTLIDGLSMTGKLSEAEDLLLEISRKGLKPDVFTYNSLISGYGFAGNVQRCIALYEEMKRSGIKPTLKTYHLLISLCTKEGIELTERLFGEMSLKPDLLVYNGVLHCYAVHGDMEKAFNLQKQMIEKSIGLDKTTYNSLILGQLKVGKLCEVRSLIDEMNAREMEPEADTYNIIVKGHCEVKDYMSAYVWYREMQEKGFLLDVCIGNELVSGLKEEWRSKEAEIVISEMNGRMLGDVTVDEDLSATEKL.

The transit peptide at 1-39 (MVTRLRLVSRSSRYATVKFTDSVSACSCRRLFSASTDPE) directs the protein to the mitochondrion. The interval 34-57 (ASTDPEPESQPEQAPPTNPVTGDE) is disordered. PPR repeat units follow at residues 108–142 (HDFS…GIYP), 143–177 (SSDS…DFRP), 178–212 (SKFM…RIYP), 213–247 (SVFI…RLLP), 248–282 (SLIT…HIEP), 283–317 (SLIT…GFVP), 318–352 (DAFT…GVKM), 353–387 (NAYT…GLVP), 388–422 (NEVI…GMKP), 423–457 (DHLA…GVSP), 458–492 (SVET…GTMP), 493–527 (NVVS…GVSP), 528–562 (KVRI…GIEL), 563–597 (NLVT…GLKP), 598–632 (DVFT…GIKP), 633–662 (TLKT…MSLK), 664–698 (DLLV…SIGL), 699–733 (DKTT…EMEP), 734–768 (EADT…GFLL), and 769–803 (DVCI…MLGD).

The protein belongs to the PPR family. P subfamily.

It is found in the mitochondrion. This chain is Pentatricopeptide repeat-containing protein At5g12100, mitochondrial, found in Arabidopsis thaliana (Mouse-ear cress).